We begin with the raw amino-acid sequence, 928 residues long: Echinoderm microtubule-associated protein-like 4 (928 aa).

A microtubule-binding region spans residues Met-1 to Asp-189. Residues Ala-14–Arg-63 adopt a coiled-coil conformation. The interval Ser-107–Ser-131 is disordered. Positions Ser-116–Ser-131 are enriched in basic and acidic residues. WD repeat units lie at residues Leu-199–Tyr-237, Thr-241–Ser-288, Val-296–Trp-336, Ala-343–Trp-378, Arg-385–Lys-424, Gln-442–His-480, Glu-485–Thr-521, Asp-524–Ser-563, Ser-567–Ala-604, Val-610–Val-646, Tyr-653–Ile-692, Arg-702–Tyr-760, and Ala-767–Leu-806. The segment at Ser-821–Ser-928 is disordered. Residues Gln-836–Gln-845 are compositionally biased toward polar residues. A compositionally biased stretch (acidic residues) spans Asp-867–Asn-876. Over residues Glu-877–Glu-898 the composition is skewed to polar residues.

This sequence belongs to the WD repeat EMAP family. Homotrimer; self-association is mediated by the N-terminal coiled coil.

It is found in the cytoplasm. The protein localises to the cytoskeleton. The protein resides in the spindle. Its subcellular location is the microtubule organizing center. It localises to the midbody. In terms of biological role, essential for the formation and stability of microtubules (MTs). Required for the organization of the mitotic spindle and for the proper attachment of kinetochores to MTs. Promotes the recruitment of NUDC to the mitotic spindle for mitotic progression. This Xenopus tropicalis (Western clawed frog) protein is Echinoderm microtubule-associated protein-like 4 (eml4).